We begin with the raw amino-acid sequence, 87 residues long: Beta-mammal toxin Css4 (87 aa).

The N-terminal stretch at 1–19 is a signal peptide; it reads MNSLLMITACLALVGTVWA. In terms of domain architecture, LCN-type CS-alpha/beta spans 20-85; it reads KEGYLVNSYT…VWPLPNKTCN (66 aa). Cystine bridges form between C31/C84, C35/C60, C44/C65, and C48/C67. Position 85 is an asparagine amide (N85).

Belongs to the long (4 C-C) scorpion toxin superfamily. Sodium channel inhibitor family. Beta subfamily. Expressed by the venom gland.

The protein localises to the secreted. In terms of biological role, beta toxins bind voltage-independently at site-4 of sodium channels (Nav) and shift the voltage of activation toward more negative potentials thereby affecting sodium channel activation and promoting spontaneous and repetitive firing. This toxin is active only on mammals. In Centruroides suffusus (Durango bark scorpion), this protein is Beta-mammal toxin Css4.